The chain runs to 508 residues: Chromosomal replication initiator protein DnaA (508 aa).

The segment at 1–91 (MADDPGSSFT…TDALSRRLGQ (91 aa)) is domain I, interacts with DnaA modulators. Residues 91 to 167 (QQIQLGVRIA…AIDPAVAAGT (77 aa)) form a domain II region. Residues 104–152 (DDVEDALIPSAEPFPDTDADLSARRRTDSRASGERGAVTNTQPGWTNYF) form a disordered region. A compositionally biased stretch (basic and acidic residues) spans 124–136 (LSARRRTDSRASG). Over residues 141–152 (VTNTQPGWTNYF) the composition is skewed to polar residues. Residues 168-384 (SLNRRYTFDT…GALIRVTAFA (217 aa)) are domain III, AAA+ region. G212, G214, K215, and T216 together coordinate ATP. Residues 385-508 (SLNKTPIDKS…TTRIRQRSKR (124 aa)) are domain IV, binds dsDNA.

Belongs to the DnaA family. Oligomerizes as a right-handed, spiral filament on DNA at oriC.

It localises to the cytoplasm. Functionally, plays an essential role in the initiation and regulation of chromosomal replication. ATP-DnaA binds to the origin of replication (oriC) to initiate formation of the DNA replication initiation complex once per cell cycle. Binds the DnaA box (a 9 base pair repeat at the origin) and separates the double-stranded (ds)DNA. Forms a right-handed helical filament on oriC DNA; dsDNA binds to the exterior of the filament while single-stranded (ss)DNA is stabiized in the filament's interior. The ATP-DnaA-oriC complex binds and stabilizes one strand of the AT-rich DNA unwinding element (DUE), permitting loading of DNA polymerase. After initiation quickly degrades to an ADP-DnaA complex that is not apt for DNA replication. Binds acidic phospholipids. The sequence is that of Chromosomal replication initiator protein DnaA from Mycobacterium avium.